Here is a 197-residue protein sequence, read N- to C-terminus: Protein GrpE (197 aa).

A disordered region spans residues 1 to 40 (MSSKEQKTPEGQAPEEIIMDRHEEIEAVEPEASAEQVDPR).

Belongs to the GrpE family. In terms of assembly, homodimer.

The protein resides in the cytoplasm. Functionally, participates actively in the response to hyperosmotic and heat shock by preventing the aggregation of stress-denatured proteins, in association with DnaK and GrpE. It is the nucleotide exchange factor for DnaK and may function as a thermosensor. Unfolded proteins bind initially to DnaJ; upon interaction with the DnaJ-bound protein, DnaK hydrolyzes its bound ATP, resulting in the formation of a stable complex. GrpE releases ADP from DnaK; ATP binding to DnaK triggers the release of the substrate protein, thus completing the reaction cycle. Several rounds of ATP-dependent interactions between DnaJ, DnaK and GrpE are required for fully efficient folding. The sequence is that of Protein GrpE from Shigella flexneri serotype 5b (strain 8401).